The chain runs to 178 residues: Inorganic pyrophosphatase (178 aa).

Residues Lys-30, Arg-44, and Tyr-56 each contribute to the substrate site. 3 residues coordinate Mg(2+): Asp-66, Asp-71, and Asp-103. Tyr-142 contributes to the substrate binding site.

This sequence belongs to the PPase family. Homohexamer. It depends on Mg(2+) as a cofactor.

The protein resides in the cytoplasm. It catalyses the reaction diphosphate + H2O = 2 phosphate + H(+). In terms of biological role, catalyzes the hydrolysis of inorganic pyrophosphate (PPi) forming two phosphate ions. This chain is Inorganic pyrophosphatase, found in Xanthomonas axonopodis pv. citri (strain 306).